Here is a 1027-residue protein sequence, read N- to C-terminus: Error-prone DNA polymerase (1027 aa).

It belongs to the DNA polymerase type-C family. DnaE2 subfamily.

It localises to the cytoplasm. It catalyses the reaction DNA(n) + a 2'-deoxyribonucleoside 5'-triphosphate = DNA(n+1) + diphosphate. In terms of biological role, DNA polymerase involved in damage-induced mutagenesis and translesion synthesis (TLS). It is not the major replicative DNA polymerase. This chain is Error-prone DNA polymerase, found in Dechloromonas aromatica (strain RCB).